The sequence spans 307 residues: MEFVFLGTGAGVPSKGRNVSAIALQLLEERGQTWLFDCGEATQHQILHTSVRPRRIEKIFITHLHGDHIFGLPGLLGSRSFQGGTTPLTVYGPKGIKQFIEVALSVSTTHVKYPLEIVEITEEGTVFEDNEFHVETKRLSHGIECFGYRIIEKDIQGALLVDKLLEMGVKPGPLFKRLKDGEVVELENGTILNGKDFIGPPQKGRVITILGDTRYCEASRELAQDADVLVHEATFAAEDEQQAYDYFHSTSKQAASIALQANAKRLILTHISSRYQGDTYKELLKEARELFSNTEIATDLKSFPVDR.

Zn(2+) contacts are provided by His-63, His-65, Asp-67, His-68, His-141, Asp-212, and His-270. Catalysis depends on Asp-67, which acts as the Proton acceptor.

Belongs to the RNase Z family. In terms of assembly, homodimer. Requires Zn(2+) as cofactor.

The enzyme catalyses Endonucleolytic cleavage of RNA, removing extra 3' nucleotides from tRNA precursor, generating 3' termini of tRNAs. A 3'-hydroxy group is left at the tRNA terminus and a 5'-phosphoryl group is left at the trailer molecule.. In terms of biological role, zinc phosphodiesterase, which displays some tRNA 3'-processing endonuclease activity. Probably involved in tRNA maturation, by removing a 3'-trailer from precursor tRNA. In Bacillus cereus (strain ZK / E33L), this protein is Ribonuclease Z.